The chain runs to 184 residues: Ribosome-recycling factor (184 aa).

This sequence belongs to the RRF family.

The protein localises to the cytoplasm. Its function is as follows. Responsible for the release of ribosomes from messenger RNA at the termination of protein biosynthesis. May increase the efficiency of translation by recycling ribosomes from one round of translation to another. This chain is Ribosome-recycling factor, found in Clostridium botulinum (strain Langeland / NCTC 10281 / Type F).